The following is a 424-amino-acid chain: L-glutamine:2-deoxy-scyllo-inosose aminotransferase (424 aa).

Residue Lys-202 is modified to N6-(pyridoxal phosphate)lysine.

This sequence belongs to the DegT/DnrJ/EryC1 family. L-glutamine:2-deoxy-scyllo-inosose/scyllo-inosose aminotransferase subfamily. It depends on pyridoxal 5'-phosphate as a cofactor.

The catalysed reaction is 2-deoxy-L-scyllo-inosose + L-glutamine = 2-deoxy-scyllo-inosamine + 2-oxoglutaramate. The enzyme catalyses 3-amino-2,3-dideoxy-scyllo-inosose + L-glutamine = 2-deoxystreptamine + 2-oxoglutaramate. Its pathway is metabolic intermediate biosynthesis; 2-deoxystreptamine biosynthesis; 2-deoxystreptamine from D-glucose 6-phosphate: step 2/4. The protein operates within metabolic intermediate biosynthesis; 2-deoxystreptamine biosynthesis; 2-deoxystreptamine from D-glucose 6-phosphate: step 4/4. It functions in the pathway antibiotic biosynthesis; ribostamycin biosynthesis. Functionally, catalyzes the PLP-dependent transamination of 2-deoxy-scyllo-inosose (2-DOI) to form 2-deoxy-scyllo-inosamine (2-DOIA) using L-glutamine as the amino donor. Also catalyzes the transamination of 3-amino-2,3-dideoxy-scyllo-inosose (keto-2-DOIA) into 2-deoxystreptamine (2-DOS). In Streptomyces ribosidificus, this protein is L-glutamine:2-deoxy-scyllo-inosose aminotransferase (rbmB).